Consider the following 106-residue polypeptide: PAT complex subunit Asterix (106 aa).

The tract at residues 1 to 29 (MSTNNMSDPRRPNKVLRYKPPPSECNPAL) is disordered. N-acetylserine is present on serine 2. Over 2-32 (STNNMSDPRRPNKVLRYKPPPSECNPALDDP) the chain is Cytoplasmic. A helical membrane pass occupies residues 33 to 51 (TPDYMNLLGMIFSMCGLML). Residue lysine 52 is a topological domain, lumenal. A helical membrane pass occupies residues 53–70 (LKWCAWVAVYCSFISFAN). At 71–74 (SRSS) the chain is on the cytoplasmic side. Residues 75–95 (EDTKQMMSSFMLSISAVVMSY) traverse the membrane as a helical segment. At 96-106 (LQNPQPMTPPW) the chain is on the lumenal side.

It belongs to the Asterix family. As to quaternary structure, component of the PAT complex, composed of WDR83OS/Asterix and CCDC47. The PAT complex is part of the multi-pass translocon (MPT) complex, composed of three subcomplexes, the GEL complex (composed of RAB5IF/OPTI and TMCO1), the BOS complex (composed of NCLN/Nicalin, NOMO1 and TMEM147) and the PAT complex (composed of WDR83OS/Asterix and CCDC47). The MPT complex associates with the SEC61 complex.

It is found in the endoplasmic reticulum membrane. Component of the multi-pass translocon (MPT) complex that mediates insertion of multi-pass membrane proteins into the lipid bilayer of membranes. The MPT complex takes over after the SEC61 complex: following membrane insertion of the first few transmembrane segments of proteins by the SEC61 complex, the MPT complex occludes the lateral gate of the SEC61 complex to promote insertion of subsequent transmembrane regions. Within the MPT complex, the PAT subcomplex sequesters any highly polar regions in the transmembrane domains away from the non-polar membrane environment until they can be buried in the interior of the fully assembled protein. Within the PAT subcomplex, WDR83OS/Asterix binds to and redirects the substrate to a location behind the SEC61 complex. This chain is PAT complex subunit Asterix (WDR83OS), found in Canis lupus familiaris (Dog).